Consider the following 247-residue polypeptide: Agamous-like MADS-box protein FUL-L (247 aa).

An MADS-box domain is found at 1–61 (MGRGRVQLKR…GKLFEYSSDS (61 aa)). Positions 88 to 178 (QGNWSMDYPK…AKKVKEKEKV (91 aa)) constitute a K-box domain. The segment at 224–247 (EDGAEARPSPNTLMPPWMLRHVNE) is disordered.

Expressed in tendrils and flowers.

It localises to the nucleus. Its function is as follows. Probable transcription factor involved in flower development. The chain is Agamous-like MADS-box protein FUL-L from Vitis vinifera (Grape).